Reading from the N-terminus, the 204-residue chain is N-(5'-phosphoribosyl)anthranilate isomerase (204 aa).

Belongs to the TrpF family.

The catalysed reaction is N-(5-phospho-beta-D-ribosyl)anthranilate = 1-(2-carboxyphenylamino)-1-deoxy-D-ribulose 5-phosphate. It participates in amino-acid biosynthesis; L-tryptophan biosynthesis; L-tryptophan from chorismate: step 3/5. The polypeptide is N-(5'-phosphoribosyl)anthranilate isomerase (Bacillus cereus (strain ZK / E33L)).